The primary structure comprises 448 residues: Probable glycine dehydrogenase (decarboxylating) subunit 1 (448 aa).

It belongs to the GcvP family. N-terminal subunit subfamily. In terms of assembly, the glycine cleavage system is composed of four proteins: P, T, L and H. In this organism, the P 'protein' is a heterodimer of two subunits.

The enzyme catalyses N(6)-[(R)-lipoyl]-L-lysyl-[glycine-cleavage complex H protein] + glycine + H(+) = N(6)-[(R)-S(8)-aminomethyldihydrolipoyl]-L-lysyl-[glycine-cleavage complex H protein] + CO2. Its function is as follows. The glycine cleavage system catalyzes the degradation of glycine. The P protein binds the alpha-amino group of glycine through its pyridoxal phosphate cofactor; CO(2) is released and the remaining methylamine moiety is then transferred to the lipoamide cofactor of the H protein. The polypeptide is Probable glycine dehydrogenase (decarboxylating) subunit 1 (Rhodospirillum rubrum (strain ATCC 11170 / ATH 1.1.1 / DSM 467 / LMG 4362 / NCIMB 8255 / S1)).